Consider the following 457-residue polypeptide: NADH-quinone oxidoreductase subunit D (457 aa).

A disordered region spans residues 1 to 23; it reads MSTHTETPVDGSAETITGAQPYE.

Belongs to the complex I 49 kDa subunit family. NDH-1 is composed of 14 different subunits. Subunits NuoB, C, D, E, F, and G constitute the peripheral sector of the complex.

It localises to the cell membrane. It carries out the reaction a quinone + NADH + 5 H(+)(in) = a quinol + NAD(+) + 4 H(+)(out). NDH-1 shuttles electrons from NADH, via FMN and iron-sulfur (Fe-S) centers, to quinones in the respiratory chain. The immediate electron acceptor for the enzyme in this species is believed to be a menaquinone. Couples the redox reaction to proton translocation (for every two electrons transferred, four hydrogen ions are translocated across the cytoplasmic membrane), and thus conserves the redox energy in a proton gradient. This chain is NADH-quinone oxidoreductase subunit D, found in Parafrankia sp. (strain EAN1pec).